Reading from the N-terminus, the 468-residue chain is UDP-N-acetylmuramoyl-L-alanine--L-glutamate ligase (468 aa).

An ATP-binding site is contributed by 122–128; that stretch reads GTKGKST.

Belongs to the MurCDEF family. MurD2 subfamily.

It localises to the cytoplasm. It carries out the reaction UDP-N-acetyl-alpha-D-muramoyl-L-alanine + L-glutamate + ATP = UDP-N-acetyl-alpha-D-muramoyl-L-alanyl-L-glutamate + ADP + phosphate + H(+). It participates in cell wall biogenesis; peptidoglycan biosynthesis. Its function is as follows. Cell wall formation. Catalyzes the addition of L-glutamate to the nucleotide precursor UDP-N-acetylmuramoyl-L-alanine. This Xylella fastidiosa (strain 9a5c) protein is UDP-N-acetylmuramoyl-L-alanine--L-glutamate ligase.